The sequence spans 118 residues: Small ribosomal subunit protein uS13 (118 aa).

The disordered stretch occupies residues 94–118 (SLPVRGQRSKTNARTRKGPRKAIKK).

It belongs to the universal ribosomal protein uS13 family. In terms of assembly, part of the 30S ribosomal subunit. Forms a loose heterodimer with protein S19. Forms two bridges to the 50S subunit in the 70S ribosome.

Located at the top of the head of the 30S subunit, it contacts several helices of the 16S rRNA. In the 70S ribosome it contacts the 23S rRNA (bridge B1a) and protein L5 of the 50S subunit (bridge B1b), connecting the 2 subunits; these bridges are implicated in subunit movement. Contacts the tRNAs in the A and P-sites. In Psychromonas ingrahamii (strain DSM 17664 / CCUG 51855 / 37), this protein is Small ribosomal subunit protein uS13.